The primary structure comprises 238 residues: MTAAAYKRILLKLSGEALMGDDAYGINEDVVSRIVSEIAEVTRLGVEVGVVIGGGNIFRGMKGAASGMDRATADYMGMLATVMNAMALADAMRRNGVEARVQSALRIDQVVEPYIRGRAIRHLEEGRVVIFAAGTGNPFFTTDTAAALRGSEIAAQIVLKATKVDGVYTADPKKDPAAQRFHRISFDEAIGRNLAVLDATAFALCRDQKLPINVFSIFKPGALKRVVMGEDEGTLVHS.

ATP is bound at residue 12–15 (KLSG). A UMP-binding site is contributed by glycine 54. 2 residues coordinate ATP: glycine 55 and arginine 59. UMP contacts are provided by residues aspartate 74 and 135-142 (TGNPFFTT). Residues threonine 162, tyrosine 168, and aspartate 171 each coordinate ATP.

It belongs to the UMP kinase family. As to quaternary structure, homohexamer.

It localises to the cytoplasm. It catalyses the reaction UMP + ATP = UDP + ADP. Its pathway is pyrimidine metabolism; CTP biosynthesis via de novo pathway; UDP from UMP (UMPK route): step 1/1. Inhibited by UTP. Catalyzes the reversible phosphorylation of UMP to UDP. The protein is Uridylate kinase of Azoarcus sp. (strain BH72).